A 394-amino-acid polypeptide reads, in one-letter code: Major outer membrane porin, serovar B (394 aa).

The N-terminal stretch at 1–22 (MKKLLKSVLVFAALSSASSLQA) is a signal peptide.

The protein belongs to the chlamydial porin (CP) (TC 1.B.2) family. In terms of assembly, part of a disulfide cross-linked outer membrane complex (COMC) composed of the major outer membrane porin (MOMP), the small cysteine-rich protein (OmcA) and the large cysteine-rich periplasmic protein (OmcB).

The protein localises to the cell outer membrane. In elementary bodies (EBs, the infectious stage, which is able to survive outside the host cell) provides the structural integrity of the outer envelope through disulfide cross-links with the small cysteine-rich protein and the large cysteine-rich periplasmic protein. It has been described in publications as the Sarkosyl-insoluble COMC (Chlamydia outer membrane complex), and serves as the functional equivalent of peptidoglycan. Functionally, permits diffusion of specific solutes through the outer membrane. This is Major outer membrane porin, serovar B (ompA) from Chlamydia trachomatis.